The primary structure comprises 793 residues: DNA mismatch repair protein MutS (793 aa).

589–596 is an ATP binding site; it reads GPNMSGKS.

It belongs to the DNA mismatch repair MutS family.

This protein is involved in the repair of mismatches in DNA. It is possible that it carries out the mismatch recognition step. This protein has a weak ATPase activity. This chain is DNA mismatch repair protein MutS, found in Thermotoga petrophila (strain ATCC BAA-488 / DSM 13995 / JCM 10881 / RKU-1).